The sequence spans 424 residues: Glutamate-1-semialdehyde 2,1-aminomutase (424 aa).

An N6-(pyridoxal phosphate)lysine modification is found at Lys263.

Belongs to the class-III pyridoxal-phosphate-dependent aminotransferase family. HemL subfamily. In terms of assembly, homodimer. Pyridoxal 5'-phosphate is required as a cofactor.

The protein resides in the cytoplasm. The enzyme catalyses (S)-4-amino-5-oxopentanoate = 5-aminolevulinate. It functions in the pathway porphyrin-containing compound metabolism; protoporphyrin-IX biosynthesis; 5-aminolevulinate from L-glutamyl-tRNA(Glu): step 2/2. The polypeptide is Glutamate-1-semialdehyde 2,1-aminomutase (Campylobacter jejuni subsp. jejuni serotype O:2 (strain ATCC 700819 / NCTC 11168)).